A 105-amino-acid polypeptide reads, in one-letter code: QADVGLALGTLYGNVFSQTTICRFEALQLSFKNMCKLKPLLNKWLEEADSSTGSPTSIDKIAAQGRKRKKRTSIEVSVKGALESHFLKCPKPAAQEITTLADSLQ.

A POU-specific domain is found at 1–49 (QADVGLALGTLYGNVFSQTTICRFEALQLSFKNMCKLKPLLNKWLEEAD). The homeobox DNA-binding region spans 67–105 (KRKKRTSIEVSVKGALESHFLKCPKPAAQEITTLADSLQ).

It belongs to the POU transcription factor family. Class-3 subfamily.

It is found in the nucleus. The polypeptide is POU domain, class 3, transcription factor 3 (pou3f3) (Xenopus laevis (African clawed frog)).